An 88-amino-acid chain; its full sequence is Small ribosomal subunit protein bS20 (88 aa).

The protein belongs to the bacterial ribosomal protein bS20 family.

In terms of biological role, binds directly to 16S ribosomal RNA. The chain is Small ribosomal subunit protein bS20 from Legionella pneumophila (strain Paris).